A 270-amino-acid chain; its full sequence is Tryptophan 2,3-dioxygenase-like protein (270 aa).

The protein belongs to the tryptophan 2,3-dioxygenase family.

The chain is Tryptophan 2,3-dioxygenase-like protein from Xanthomonas campestris pv. campestris (strain 8004).